Consider the following 363-residue polypeptide: LIM and cysteine-rich domains protein 1 (363 aa).

The residue at position 16 (S16) is a Phosphoserine. The 108-residue stretch at 99 to 206 folds into the PET domain; it reads MIMTNPIATG…GEVALPGQGG (108 aa). Residues 200–234 form a disordered region; the sequence is ALPGQGGLPKEEGKQQEKPEGAETAPPTTNGSIGD. Over residues 208–220 the composition is skewed to basic and acidic residues; the sequence is PKEEGKQQEKPEG. LIM zinc-binding domains are found at residues 239–304 and 305–363; these read YVCE…SLRP and RCSG…SKRS.

In terms of assembly, interacts with beta-dystroglycan. Interacts with GATA1, GATA4 and GATA6.

It is found in the cytoplasm. The protein resides in the nucleus. Functionally, transcriptional cofactor that restricts GATA6 function by inhibiting DNA-binding, resulting in repression of GATA6 transcriptional activation of downstream target genes. Represses GATA6-mediated trans activation of lung- and cardiac tissue-specific promoters. Inhibits DNA-binding by GATA4 and GATA1 to the cTNC promoter. Plays a critical role in the development of cardiac hypertrophy via activation of calcineurin/nuclear factor of activated T-cells signaling pathway. In Bos taurus (Bovine), this protein is LIM and cysteine-rich domains protein 1 (LMCD1).